The primary structure comprises 343 residues: UPF0324 membrane protein LJ_1117 (343 aa).

Helical transmembrane passes span 10–27 (FGLA…GIFL), 32–54 (YVNL…VLPV), 64–86 (IGFI…LNLT), 91–113 (AGIK…TYWL), 123–145 (LAVL…VSPQ), 157–179 (NEVL…EIVI), 219–241 (ALIM…GYWY), 262–284 (IPWF…FPPV), 288–310 (GLVQ…SVNF), and 317–339 (GGTV…IIMS).

Belongs to the UPF0324 family.

It localises to the cell membrane. In Lactobacillus johnsonii (strain CNCM I-12250 / La1 / NCC 533), this protein is UPF0324 membrane protein LJ_1117.